The following is a 321-amino-acid chain: Coproporphyrin III ferrochelatase (321 aa).

His-185 and Glu-267 together coordinate Fe(2+).

This sequence belongs to the ferrochelatase family.

The protein resides in the cytoplasm. The enzyme catalyses Fe-coproporphyrin III + 2 H(+) = coproporphyrin III + Fe(2+). It functions in the pathway porphyrin-containing compound metabolism; protoheme biosynthesis. Involved in coproporphyrin-dependent heme b biosynthesis. Catalyzes the insertion of ferrous iron into coproporphyrin III to form Fe-coproporphyrin III. This is Coproporphyrin III ferrochelatase from Lacticaseibacillus paracasei (strain ATCC 334 / BCRC 17002 / CCUG 31169 / CIP 107868 / KCTC 3260 / NRRL B-441) (Lactobacillus paracasei).